We begin with the raw amino-acid sequence, 349 residues long: Isopentenyl-diphosphate delta-isomerase (349 aa).

6 to 7 (RK) serves as a coordination point for substrate. FMN-binding positions include 62-64 (AMT), Ser-93, and Asn-122. Gln-152 contributes to the substrate binding site. A Mg(2+)-binding site is contributed by Glu-153. FMN-binding positions include Lys-184, Thr-214, 258 to 259 (GG), and 280 to 281 (AG).

It belongs to the IPP isomerase type 2 family. In terms of assembly, homooctamer. Dimer of tetramers. The cofactor is FMN. NADPH is required as a cofactor. Requires Mg(2+) as cofactor.

The protein localises to the cytoplasm. The enzyme catalyses isopentenyl diphosphate = dimethylallyl diphosphate. Its function is as follows. Involved in the biosynthesis of isoprenoids. Catalyzes the 1,3-allylic rearrangement of the homoallylic substrate isopentenyl (IPP) to its allylic isomer, dimethylallyl diphosphate (DMAPP). The sequence is that of Isopentenyl-diphosphate delta-isomerase from Bacillus anthracis (strain A0248).